Here is a 265-residue protein sequence, read N- to C-terminus: uncharacterized protein (265 aa).

CBS domains are found at residues 9–64 and 67–126; these read MTKK…EKVE and MTKR…TTPK.

This is an uncharacterized protein from Methanocaldococcus jannaschii (strain ATCC 43067 / DSM 2661 / JAL-1 / JCM 10045 / NBRC 100440) (Methanococcus jannaschii).